A 410-amino-acid chain; its full sequence is Putative ribosomal large subunit pseudouridine synthase SVR1, chloroplastic (410 aa).

A chloroplast-targeting transit peptide spans 1–35 (MASVAASSSISFAASFLKIKAFPLSPRFFPIRTLR). Positions 96–143 (HNLAIDATTQNPKKKDKSKKKQPQATSSSSATTTASSPASHSEVKPKL) are disordered. Positions 107 to 117 (PKKKDKSKKKQ) are enriched in basic residues. The segment covering 118-135 (PQATSSSSATTTASSPAS) has biased composition (low complexity). Residues 160–229 (QRLSKVLAAA…PKVYFALNKP (70 aa)) form the S4 RNA-binding domain. Aspartate 274 functions as the Nucleophile in the catalytic mechanism.

Belongs to the pseudouridine synthase RsuA family. As to expression, highly expressed in young seedlings. Expressed in roots, rosette leaves, cauline leaves, stems and flowers.

It localises to the plastid. The protein resides in the chloroplast. Its function is as follows. Responsible for synthesis of pseudouridine in chloroplastic 23S ribosomal RNA. Necessary for normal chloroplast rRNA processing and translation. Required for normal chloroplast development and maintenance. May function in other plastids, such as root amyloplasts. The polypeptide is Putative ribosomal large subunit pseudouridine synthase SVR1, chloroplastic (SVR1) (Arabidopsis thaliana (Mouse-ear cress)).